A 189-amino-acid polypeptide reads, in one-letter code: MRKIGIIGGTFDPPHYGHLLIANEVYHALNLEEVWFLPNQIPPHKQGRNITSVESRLQMLELATEAEEHFSICLEELSRKGPSYTYDTMLQLTKKYPDVQFHFIIGGDMVEYLPKWYNIEALLDLVTFVGVARPGYTLHTPYPITTVEIPEFAVSSSLLRERYKEKKTCKYLLPEKVQVYIERNGLYES.

Belongs to the NadD family.

It carries out the reaction nicotinate beta-D-ribonucleotide + ATP + H(+) = deamido-NAD(+) + diphosphate. It participates in cofactor biosynthesis; NAD(+) biosynthesis; deamido-NAD(+) from nicotinate D-ribonucleotide: step 1/1. Catalyzes the reversible adenylation of nicotinate mononucleotide (NaMN) to nicotinic acid adenine dinucleotide (NaAD). The protein is Probable nicotinate-nucleotide adenylyltransferase of Bacillus cereus (strain AH820).